The primary structure comprises 130 residues: Small ribosomal subunit protein uS11c (130 aa).

Belongs to the universal ribosomal protein uS11 family. Part of the 30S ribosomal subunit.

The protein localises to the plastid. It localises to the chloroplast. This chain is Small ribosomal subunit protein uS11c, found in Adiantum capillus-veneris (Maidenhair fern).